The primary structure comprises 117 residues: Large ribosomal subunit protein uL18 (117 aa).

The span at 1 to 17 (MNLSRNKARKVKQKRLR) shows a compositional bias: basic residues. The segment at 1–23 (MNLSRNKARKVKQKRLRAKSELS) is disordered.

This sequence belongs to the universal ribosomal protein uL18 family. In terms of assembly, part of the 50S ribosomal subunit; part of the 5S rRNA/L5/L18/L25 subcomplex. Contacts the 5S and 23S rRNAs.

This is one of the proteins that bind and probably mediate the attachment of the 5S RNA into the large ribosomal subunit, where it forms part of the central protuberance. This chain is Large ribosomal subunit protein uL18, found in Mycoplasmopsis synoviae (strain 53) (Mycoplasma synoviae).